The chain runs to 109 residues: Aquaporin-2 (109 aa).

Over 1-6 the chain is Cytoplasmic; it reads SIAFSR. The helical transmembrane segment at 7 to 27 threads the bilayer; it reads AVFSEFLATLLFVFFGLGSAL. The Extracellular portion of the chain corresponds to 28-35; sequence NWPQALPS. A helical transmembrane segment spans residues 36-54; that stretch reads VLQIAMAFGLAIGTLVQAL. Residues 55–59 are Cytoplasmic-facing; that stretch reads GHISG. Positions 60–69 form an intramembrane region, discontinuously helical; that stretch reads AHINPAVTVA. Positions 63–65 match the NPA 1 motif; sequence NPA. Residues 70–80 are Cytoplasmic-facing; that stretch reads CLVGCHVSFLR. A helical membrane pass occupies residues 81–102; sequence ATFYLAAQLLGAVAGAAILHEI. Residues 103–109 lie on the Extracellular side of the membrane; that stretch reads TPPDIRG.

This sequence belongs to the MIP/aquaporin (TC 1.A.8) family. As to quaternary structure, homotetramer. Serine phosphorylation is necessary and sufficient for expression at the apical membrane. Endocytosis is not phosphorylation-dependent. Post-translationally, N-glycosylated.

The protein localises to the apical cell membrane. It localises to the basolateral cell membrane. The protein resides in the cell membrane. It is found in the cytoplasmic vesicle membrane. Its subcellular location is the golgi apparatus. The protein localises to the trans-Golgi network membrane. It catalyses the reaction H2O(in) = H2O(out). The catalysed reaction is glycerol(in) = glycerol(out). Its function is as follows. Forms a water-specific channel that provides the plasma membranes of renal collecting duct with high permeability to water, thereby permitting water to move in the direction of an osmotic gradient. Plays an essential role in renal water homeostasis. Could also be permeable to glycerol. This is Aquaporin-2 from Dugong dugon (Dugong).